We begin with the raw amino-acid sequence, 295 residues long: Indole-3-glycerol phosphate synthase (295 aa).

This sequence belongs to the TrpC family.

The catalysed reaction is 1-(2-carboxyphenylamino)-1-deoxy-D-ribulose 5-phosphate + H(+) = (1S,2R)-1-C-(indol-3-yl)glycerol 3-phosphate + CO2 + H2O. Its pathway is amino-acid biosynthesis; L-tryptophan biosynthesis; L-tryptophan from chorismate: step 4/5. This chain is Indole-3-glycerol phosphate synthase, found in Prochlorococcus marinus (strain MIT 9301).